The sequence spans 143 residues: Large ribosomal subunit protein uL11 (143 aa).

The protein belongs to the universal ribosomal protein uL11 family. Part of the ribosomal stalk of the 50S ribosomal subunit. Interacts with L10 and the large rRNA to form the base of the stalk. L10 forms an elongated spine to which L12 dimers bind in a sequential fashion forming a multimeric L10(L12)X complex. In terms of processing, one or more lysine residues are methylated.

Forms part of the ribosomal stalk which helps the ribosome interact with GTP-bound translation factors. The chain is Large ribosomal subunit protein uL11 from Burkholderia cenocepacia (strain HI2424).